The following is a 218-amino-acid chain: Type II restriction enzyme KpnI (218 aa).

It catalyses the reaction Endonucleolytic cleavage of DNA to give specific double-stranded fragments with terminal 5'-phosphates.. In terms of biological role, a P subtype restriction enzyme that recognizes the double-stranded sequence 5'-GGTACC-3' and cleaves after C-5. The sequence is that of Type II restriction enzyme KpnI from Klebsiella pneumoniae.